The following is a 389-amino-acid chain: Protein IQ-domain 26 (389 aa).

2 consecutive IQ domains span residues 106-134 (ERWAAVKIQSVFKGYLARKALRALKGLVK) and 135-157 (LQALVRGYLVRKRAAETLHSMQA). The calmodulin-binding stretch occupies residues 137–151 (ALVRGYLVRKRAAET). The tract at residues 347-374 (SVSGVRMVQPQPQPQTQTQQQKRSPCSY) is disordered.

Belongs to the IQD family. In terms of assembly, binds to multiple calmodulin (CaM) in the presence of Ca(2+) and CaM-like proteins.

Its subcellular location is the cell membrane. The protein localises to the cytoplasm. The protein resides in the cytoskeleton. In terms of biological role, may be involved in cooperative interactions with calmodulins or calmodulin-like proteins. Recruits calmodulin proteins to microtubules, thus being a potential scaffold in cellular signaling and trafficking. May associate with nucleic acids and regulate gene expression at the transcriptional or post-transcriptional level. The chain is Protein IQ-domain 26 from Arabidopsis thaliana (Mouse-ear cress).